Reading from the N-terminus, the 791-residue chain is Interleukin-17 receptor C (791 aa).

An N-terminal signal peptide occupies residues Met-1 to Ser-20. Residues Leu-21–Arg-538 are Extracellular-facing. N-linked (GlcNAc...) asparagine glycans are attached at residues Asn-189 and Asn-257. A disulfide bond links Cys-265 and Cys-277. N-linked (GlcNAc...) asparagine glycans are attached at residues Asn-284, Asn-297, Asn-324, and Asn-334. Intrachain disulfides connect Cys-341–Cys-391, Cys-343–Cys-359, and Cys-400–Cys-409. N-linked (GlcNAc...) asparagine glycans are attached at residues Asn-420, Asn-443, and Asn-477. A disulfide bond links Cys-439 and Cys-453. Disulfide bonds link Cys-481–Cys-488 and Cys-515–Cys-529. Residues Trp-539–Leu-559 form a helical membrane-spanning segment. The Cytoplasmic portion of the chain corresponds to Lys-560–Thr-791. In terms of domain architecture, SEFIR spans Gly-583–Gly-735. The interval Ala-762–Thr-791 is disordered. Positions Arg-777–Thr-791 are enriched in gly residues.

As to quaternary structure, homodimer; disulfide-linked. Heterodimer with IL17RA. Heterodimerization with IL17RA is independent of the cytoplasmic tail. Associates with non-glycosylated IL17RA constitutively. Binding of IL17A and IL17F induces association with glycosylated IL17RA. Forms complexes with 2:1 binding stoichiometry: two receptor chains for one interleukin molecule. IL17A homodimer preferentially drives the formation of IL17RA-IL17RC heterodimeric receptor complex, whereas IL17F homodimer forms predominantly complexes with IL17RC homodimer. IL17A-IL17F forms complexes with IL17RA-IL17RC, but with lower affinity when compared to IL17A homodimer. IL17RC chain cannot distinguish between IL17A and IL17F molecules, potentially enabling the formation of topologically distinct complexes. Interacts (through SEFIR domain and extended downstream region) with TRAF3IP2/ACT1 (phosphorylated). As to expression, expressed in prostate, skeletal muscle, kidney and placenta (at protein level). Expressed in brain, cartilage, colon, heart, intestine, kidney, liver, lung, muscle, placenta, and prostate. Also detected in thyroid, trachea and adrenal gland. Low expression in thymus and leukocytes.

It localises to the cell membrane. Receptor for IL17A and IL17F, major effector cytokines of innate and adaptive immune system involved in antimicrobial host defense and maintenance of tissue integrity. Receptor for IL17A and IL17F, major effector cytokines of innate and adaptive immune system involved in antimicrobial host defense and maintenance of tissue integrity. Receptor for IL17A and IL17F homodimers as part of a heterodimeric complex with IL17RA. Receptor for the heterodimer formed by IL17A and IL17B as part of a heterodimeric complex with IL17RA. Has also been shown to be the cognate receptor for IL17F and to bind IL17A with high affinity without the need for IL17RA. Upon binding of IL17F homodimer triggers downstream activation of TRAF6 and NF-kappa-B signaling pathway. Induces transcriptional activation of IL33, a potent cytokine that stimulates group 2 innate lymphoid cells and adaptive T-helper 2 cells involved in pulmonary allergic response to fungi. Promotes sympathetic innervation of peripheral organs by coordinating the communication between gamma-delta T cells and parenchymal cells. Stimulates sympathetic innervation of thermogenic adipose tissue by driving TGFB1 expression. Binding of IL17A-IL17F to IL17RA-IL17RC heterodimeric receptor complex triggers homotypic interaction of IL17RA and IL17RC chains with TRAF3IP2 adapter through SEFIR domains. This leads to downstream TRAF6-mediated activation of NF-kappa-B and MAPkinase pathways ultimately resulting in transcriptional activation of cytokines, chemokines, antimicrobial peptides and matrix metalloproteinases, with potential strong immune inflammation. Primarily induces neutrophil activation and recruitment at infection and inflammatory sites. Stimulates the production of antimicrobial beta-defensins DEFB1, DEFB103A, and DEFB104A by mucosal epithelial cells, limiting the entry of microbes through the epithelial barriers. In terms of biological role, receptor for both IL17A and IL17F. Functionally, does not bind IL17A or IL17F. This Homo sapiens (Human) protein is Interleukin-17 receptor C (IL17RC).